The primary structure comprises 240 residues: Probable septum site-determining protein MinC (240 aa).

The protein belongs to the MinC family. As to quaternary structure, interacts with MinD and FtsZ.

Functionally, cell division inhibitor that blocks the formation of polar Z ring septums. Rapidly oscillates between the poles of the cell to destabilize FtsZ filaments that have formed before they mature into polar Z rings. Prevents FtsZ polymerization. This chain is Probable septum site-determining protein MinC, found in Acinetobacter baylyi (strain ATCC 33305 / BD413 / ADP1).